The sequence spans 302 residues: Epoxyqueuosine reductase (302 aa).

The Proton donor role is filled by aspartate 128. A 4Fe-4S ferredoxin-type 1 domain is found at leucine 170 to valine 202. Cysteine 182, cysteine 185, cysteine 188, cysteine 192, cysteine 207, cysteine 234, cysteine 237, and cysteine 241 together coordinate [4Fe-4S] cluster. The 4Fe-4S ferredoxin-type 2 domain occupies asparagine 221 to serine 251.

It belongs to the QueG family. As to quaternary structure, monomer. The cofactor is cob(II)alamin. [4Fe-4S] cluster serves as cofactor.

It is found in the cytoplasm. The enzyme catalyses epoxyqueuosine(34) in tRNA + AH2 = queuosine(34) in tRNA + A + H2O. Its pathway is tRNA modification; tRNA-queuosine biosynthesis. Functionally, catalyzes the conversion of epoxyqueuosine (oQ) to queuosine (Q), which is a hypermodified base found in the wobble positions of tRNA(Asp), tRNA(Asn), tRNA(His) and tRNA(Tyr). The chain is Epoxyqueuosine reductase from Leadbetterella byssophila (strain DSM 17132 / JCM 16389 / KACC 11308 / NBRC 106382 / 4M15).